We begin with the raw amino-acid sequence, 309 residues long: Mitochondrial substrate carrier family protein ancA (309 aa).

Solcar repeat units follow at residues 10–102 (SSFV…YKKF), 114–203 (KFFI…AKGI), and 216–299 (ASWG…IQKL). Helical transmembrane passes span 12–41 (FVKD…LLLQ), 79–103 (LANV…KKFF), 113–133 (TKFF…SLLF), 181–201 (VSVG…DTAK), and 215–235 (WASW…SYPF). Residues Arg84 and Lys96 each coordinate ADP. Residue Arg239 participates in ADP binding. The important for transport activity stretch occupies residues 239–244 (RRRMMM). Residues 239-244 (RRRMMM) carry the Nucleotide carrier signature motif motif. The chain crosses the membrane as a helical span at residues 276 to 293 (ALSNAIRGSGGALVLVIY).

The protein belongs to the mitochondrial carrier (TC 2.A.29) family. As to quaternary structure, monomer.

It localises to the mitochondrion inner membrane. It catalyses the reaction ADP(in) + ATP(out) = ADP(out) + ATP(in). Its activity is regulated as follows. The matrix-open state (m-state) is inhibited by the membrane-permeable bongkrekic acid (BKA). The cytoplasmic-open state (c-state) is inhibited by the membrane-impermeable toxic inhibitor carboxyatractyloside (CATR). ADP:ATP antiporter that mediates import of ADP into the mitochondrial matrix for ATP synthesis, and export of ATP out to fuel the cell. Cycles between the cytoplasmic-open state (c-state) and the matrix-open state (m-state): operates by the alternating access mechanism with a single substrate-binding site intermittently exposed to either the cytosolic (c-state) or matrix (m-state) side of the inner mitochondrial membrane. The polypeptide is Mitochondrial substrate carrier family protein ancA (ancA) (Dictyostelium discoideum (Social amoeba)).